Consider the following 185-residue polypeptide: Ribosome-recycling factor (185 aa).

The protein belongs to the RRF family.

The protein resides in the cytoplasm. Its function is as follows. Responsible for the release of ribosomes from messenger RNA at the termination of protein biosynthesis. May increase the efficiency of translation by recycling ribosomes from one round of translation to another. The protein is Ribosome-recycling factor of Thermotoga petrophila (strain ATCC BAA-488 / DSM 13995 / JCM 10881 / RKU-1).